Here is a 456-residue protein sequence, read N- to C-terminus: MSQTTTNPHVAVLAFPFSTHAAPLLAVVRRLAAAAPHAVFSFFSTSQSNASIFHDSMHTMQCNIKSYDISDGVPEGYVFAGRPQEDIELFTRAAPESFRQGMVMAVAETGRPVSCLVADAFIWFAADMAAEMGLAWLPFWTAGPNSLSTHVYIDEIREKIGVSGIQGREDELLNFIPGMSKVRFRDLQEGIVFGNLNSLFSRMLHRMGQVLPKATAVFINSFEELDDSLTNDLKSKLKTYLNIGPFNLITPPPVVPNTTGCLQWLKERKPTSVVYISFGTVTTPPPAEVVALSEALEASRVPFIWSLRDKARVHLPEGFLEKTRGYGMVVPWAPQAEVLAHEAVGAFVTHCGWNSLWESVAGGVPLICRPFFGDQRLNGRMVEDVLEIGVRIEGGVFTKSGLMSCFDQILSQEKGKKLRENLRALRETADRAVGPKGSSTENFITLVDLVSKPKDV.

Serine 18 is a binding site for kaempferol. Serine 18 serves as a coordination point for quercetin. A UDP-binding site is contributed by threonine 19. Threonine 19 provides a ligand contact to UDP-alpha-D-glucose. Positions 20 and 84 each coordinate kaempferol. The Proton acceptor role is filled by histidine 20. Glutamine 84 is a binding site for quercetin. Aspartate 119 acts as the Charge relay in catalysis. Threonine 141 lines the UDP-alpha-D-glucose pocket. Residues histidine 150 and glutamine 188 each coordinate kaempferol. 2 residues coordinate quercetin: histidine 150 and glutamine 188. Threonine 280, serine 306, tryptophan 332, alanine 333, and histidine 350 together coordinate UDP. The UDP-alpha-D-glucose site is built by threonine 280, serine 306, tryptophan 332, alanine 333, histidine 350, tryptophan 353, asparagine 354, serine 355, and glutamate 358. 3 residues coordinate UDP: asparagine 354, serine 355, and glutamate 358. Glycine 373 lines the quercetin pocket. UDP-alpha-D-glucose-binding residues include aspartate 374 and glutamine 375.

It belongs to the UDP-glycosyltransferase family. Detected only in berry skin.

The enzyme catalyses an anthocyanidin + UDP-alpha-D-glucose + H(+) = an anthocyanidin 3-O-beta-D-glucoside + UDP. It carries out the reaction cyanidin + UDP-alpha-D-glucose = cyanidin 3-O-beta-D-glucoside + UDP + H(+). It catalyses the reaction delphinidin + UDP-alpha-D-glucose = delphinidin 3-O-beta-D-glucoside + UDP. The catalysed reaction is peonidin + UDP-alpha-D-glucose = peonidin 3-O-beta-D-glucoside + UDP. The enzyme catalyses pelargonidin + UDP-alpha-D-glucose = pelargonidin 3-O-beta-D-glucoside + UDP. It carries out the reaction malvidin + UDP-alpha-D-glucose = malvidin 3-O-beta-D-glucoside + UDP. It catalyses the reaction a flavonol + UDP-alpha-D-glucose = a flavonol 3-O-beta-D-glucoside + UDP + H(+). It functions in the pathway pigment biosynthesis; anthocyanin biosynthesis. Its activity is regulated as follows. Inhibited by Mn(2+) and Zn(2+). Its function is as follows. In the presence of other necessary color factors, this glycosylation reaction allows the accumulation of anthocyanin pigments. Involved in the formation of red wine pigments. UDP-glucose (UDP-Glc) is the physiological sugar donor, and cyanidin is the natural acceptor in vivo. Can glucosylate the anthocyanidins delphinidin, peonidin, pelargonidin and malvidin. The flavonols quercitin and kaempferol can also be glucosylated in vitro, but with glucosylation rates 50-100 times lower than cyanidin. In vitro, can use UDP-Glc, UDP-5SGlc, UDP-Xyl, UDP-Man, UDP-Gal, UDP-GlcNAc, GDP-Glc, dTDP-Glc and dTDP-Xyl as sugar donors, but not UDP-6OMeGal, UDP-Ara, UDP-6FGal, UDP-GlcN, UDP-2FGal, UDP-5SAra, GDP-Man, GDP-Fuc, UDP-Fuc or UDP-Rha. The protein is Anthocyanidin 3-O-glucosyltransferase UFGT of Vitis vinifera (Grape).